Consider the following 297-residue polypeptide: MDKGEGLRLAATLRQWTRLYGGCHLLLGAVVCSLLAACSSSPPGGVKVVDRNGSAPAAARRTPVTSGQYIVRRGDTLYSIAFRFGWDWKALAARNGIAPPYTIQVGQAIQFGGRASTQPSVAKNTPVVAAPVATKPTPVPPAVSTSVPAKPAPAPASTTTPPSSGATPVVAGPAVGGWAWPASGTLIGRFASNGSLNKGIDIAGQLGQPVLAASGGTVVYAGSGLRGYGELVIIKHNETYVSAYGHNRRLLVREGQQVKVGQSIAEMGSTGTDRVKLHFEIRRQGKPVDPLQYLPRR.

The first 22 residues, 1–22 (MDKGEGLRLAATLRQWTRLYGG), serve as a signal peptide directing secretion. A lipid anchor (N-palmitoyl cysteine) is attached at Cys23. A lipid anchor (S-diacylglycerol cysteine) is attached at Cys23. The LysM domain occupies 67-111 (GQYIVRRGDTLYSIAFRFGWDWKALAARNGIAPPYTIQVGQAIQF). Residues 134–168 (TKPTPVPPAVSTSVPAKPAPAPASTTTPPSSGATP) form a disordered region.

The protein belongs to the E.coli NlpD/Haemophilus LppB family.

The protein localises to the cell inner membrane. The chain is Lipoprotein NlpD/LppB homolog from Pseudomonas aeruginosa (strain ATCC 15692 / DSM 22644 / CIP 104116 / JCM 14847 / LMG 12228 / 1C / PRS 101 / PAO1).